Here is a 31-residue protein sequence, read N- to C-terminus: Kalata-B9 (31 aa).

The segment at residues 1-31 (GSVFNCGETCVLGTCYTPGCTCNTYRVCTKD) is a cross-link (cyclopeptide (Gly-Asp)). 3 disulfide bridges follow: cysteine 6/cysteine 20, cysteine 10/cysteine 22, and cysteine 15/cysteine 28.

This sequence belongs to the cyclotide family. Bracelet subfamily. Post-translationally, this peptide occurs in both cyclic and linear forms.

Its function is as follows. Probably participates in a plant defense mechanism. This chain is Kalata-B9, found in Oldenlandia affinis.